Here is a 429-residue protein sequence, read N- to C-terminus: 3-phosphoshikimate 1-carboxyvinyltransferase (429 aa).

3-phosphoshikimate is bound by residues Lys-23, Ser-24, and Arg-28. Lys-23 is a binding site for phosphoenolpyruvate. Phosphoenolpyruvate is bound by residues Gly-95 and Arg-123. Residues Ser-168, Gln-170, Asp-316, and Lys-343 each coordinate 3-phosphoshikimate. Residue Gln-170 participates in phosphoenolpyruvate binding. Asp-316 serves as the catalytic Proton acceptor. Positions 347 and 389 each coordinate phosphoenolpyruvate.

It belongs to the EPSP synthase family. Monomer.

Its subcellular location is the cytoplasm. It carries out the reaction 3-phosphoshikimate + phosphoenolpyruvate = 5-O-(1-carboxyvinyl)-3-phosphoshikimate + phosphate. The protein operates within metabolic intermediate biosynthesis; chorismate biosynthesis; chorismate from D-erythrose 4-phosphate and phosphoenolpyruvate: step 6/7. In terms of biological role, catalyzes the transfer of the enolpyruvyl moiety of phosphoenolpyruvate (PEP) to the 5-hydroxyl of shikimate-3-phosphate (S3P) to produce enolpyruvyl shikimate-3-phosphate and inorganic phosphate. The protein is 3-phosphoshikimate 1-carboxyvinyltransferase of Bacillus anthracis (strain A0248).